A 129-amino-acid chain; its full sequence is Glycine cleavage system H protein (129 aa).

The region spanning 24–106 (IATIGISAFA…YGEGWLVKVR (83 aa)) is the Lipoyl-binding domain. Residue Lys-65 is modified to N6-lipoyllysine.

This sequence belongs to the GcvH family. As to quaternary structure, the glycine cleavage system is composed of four proteins: P, T, L and H. Requires (R)-lipoate as cofactor.

Its function is as follows. The glycine cleavage system catalyzes the degradation of glycine. The H protein shuttles the methylamine group of glycine from the P protein to the T protein. This chain is Glycine cleavage system H protein, found in Cyanothece sp. (strain PCC 7425 / ATCC 29141).